The following is a 196-amino-acid chain: Large ribosomal subunit protein uL11m (196 aa).

This sequence belongs to the universal ribosomal protein uL11 family. As to quaternary structure, component of the mitochondrial ribosome large subunit (39S) which comprises a 16S rRNA and about 50 distinct proteins.

It localises to the mitochondrion. This is Large ribosomal subunit protein uL11m (mRpL11) from Drosophila melanogaster (Fruit fly).